Consider the following 515-residue polypeptide: Putative acetolactate synthase large subunit IlvX (515 aa).

Glu48 lines the thiamine diphosphate pocket. Residues 249-269 (FAEGAAAQLDGVKHLVLAGAR) and 283-302 (DLVPAGCEVHVLAEPGGAAD) contribute to the FAD site. Residues 357 to 436 (TCGVLLPQAT…VTTVIYNNGA (80 aa)) are thiamine pyrophosphate binding. Positions 407 and 434 each coordinate Mg(2+).

Belongs to the TPP enzyme family. In terms of assembly, heterodimer of large catalytic subunit and small regulatory subunit. Mg(2+) is required as a cofactor. It depends on thiamine diphosphate as a cofactor.

It carries out the reaction 2 pyruvate + H(+) = (2S)-2-acetolactate + CO2. Its pathway is amino-acid biosynthesis; L-isoleucine biosynthesis; L-isoleucine from 2-oxobutanoate: step 1/4. It participates in amino-acid biosynthesis; L-valine biosynthesis; L-valine from pyruvate: step 1/4. Catalyzes the conversion of 2 pyruvate molecules into acetolactate in the first common step of the biosynthetic pathway of the branched-amino acids such as leucine, isoleucine, and valine. The chain is Putative acetolactate synthase large subunit IlvX (ilvX) from Mycobacterium tuberculosis (strain ATCC 25618 / H37Rv).